Reading from the N-terminus, the 329-residue chain is NADH-quinone oxidoreductase subunit H 1 (329 aa).

A run of 8 helical transmembrane segments spans residues 12-32 (LAKI…LVFA), 78-98 (WLFY…FAVI), 120-140 (VGLL…ALGG), 159-179 (LISY…LAGS), 191-211 (GIWF…SIAA), 242-262 (LFFV…TTFF), 270-290 (WLPP…FFIW), and 308-328 (WKVL…ILML).

The protein belongs to the complex I subunit 1 family. As to quaternary structure, NDH-1 is composed of 14 different subunits. Subunits NuoA, H, J, K, L, M, N constitute the membrane sector of the complex.

It is found in the cell inner membrane. The catalysed reaction is a quinone + NADH + 5 H(+)(in) = a quinol + NAD(+) + 4 H(+)(out). NDH-1 shuttles electrons from NADH, via FMN and iron-sulfur (Fe-S) centers, to quinones in the respiratory chain. The immediate electron acceptor for the enzyme in this species is believed to be ubiquinone. Couples the redox reaction to proton translocation (for every two electrons transferred, four hydrogen ions are translocated across the cytoplasmic membrane), and thus conserves the redox energy in a proton gradient. This subunit may bind ubiquinone. This chain is NADH-quinone oxidoreductase subunit H 1, found in Geobacter metallireducens (strain ATCC 53774 / DSM 7210 / GS-15).